A 615-amino-acid chain; its full sequence is 1-deoxy-D-xylulose-5-phosphate synthase (615 aa).

Residues H72 and 113 to 115 contribute to the thiamine diphosphate site; that span reads GHA. A Mg(2+)-binding site is contributed by D144. Residues 145–146, N173, Y281, and E360 each bind thiamine diphosphate; that span reads GA. N173 contacts Mg(2+).

The protein belongs to the transketolase family. DXPS subfamily. In terms of assembly, homodimer. Requires Mg(2+) as cofactor. Thiamine diphosphate is required as a cofactor.

The catalysed reaction is D-glyceraldehyde 3-phosphate + pyruvate + H(+) = 1-deoxy-D-xylulose 5-phosphate + CO2. The protein operates within metabolic intermediate biosynthesis; 1-deoxy-D-xylulose 5-phosphate biosynthesis; 1-deoxy-D-xylulose 5-phosphate from D-glyceraldehyde 3-phosphate and pyruvate: step 1/1. Catalyzes the acyloin condensation reaction between C atoms 2 and 3 of pyruvate and glyceraldehyde 3-phosphate to yield 1-deoxy-D-xylulose-5-phosphate (DXP). This Thermus thermophilus (strain ATCC BAA-163 / DSM 7039 / HB27) protein is 1-deoxy-D-xylulose-5-phosphate synthase.